A 231-amino-acid chain; its full sequence is Sugar fermentation stimulation protein homolog (231 aa).

This sequence belongs to the SfsA family.

The protein is Sugar fermentation stimulation protein homolog of Geotalea uraniireducens (strain Rf4) (Geobacter uraniireducens).